The following is a 201-amino-acid chain: 3-isopropylmalate dehydratase small subunit (201 aa).

It belongs to the LeuD family. LeuD type 1 subfamily. Heterodimer of LeuC and LeuD.

It carries out the reaction (2R,3S)-3-isopropylmalate = (2S)-2-isopropylmalate. The protein operates within amino-acid biosynthesis; L-leucine biosynthesis; L-leucine from 3-methyl-2-oxobutanoate: step 2/4. Catalyzes the isomerization between 2-isopropylmalate and 3-isopropylmalate, via the formation of 2-isopropylmaleate. This chain is 3-isopropylmalate dehydratase small subunit, found in Sinorhizobium fredii (strain NBRC 101917 / NGR234).